A 363-amino-acid polypeptide reads, in one-letter code: Apelin receptor B (363 aa).

The Extracellular portion of the chain corresponds to 1-38; the sequence is MESEGFSATTEQYEYYDYANETGLQPCDETDWDFSYSL. N-linked (GlcNAc...) asparagine glycosylation occurs at N20. 2 disulfide bridges follow: C27-C287 and C109-C186. A helical transmembrane segment spans residues 39–59; sequence LPVFYMIVFVLGLSGNGVVIF. At 60–77 the chain is on the cytoplasmic side; the sequence is TVWKAKPKRRSADTYIGN. The helical transmembrane segment at 78–98 threads the bilayer; sequence LALADLAFVVTLPLWATYTAL. Residues 99–111 are Extracellular-facing; the sequence is GFHWPFGSALCKL. A helical transmembrane segment spans residues 112–132; that stretch reads SSYLVLLNMFASVFCLTCLSF. Over 133–152 the chain is Cytoplasmic; it reads DRYLAIVHSLSSAKLRSRSS. The helical transmembrane segment at 153–173 threads the bilayer; sequence ILVSLAVIWLFSGLLALPSLI. The Extracellular portion of the chain corresponds to 174–200; that stretch reads LRDTRVEGNNTICDLDFSGVSSKENEN. N-linked (GlcNAc...) asparagine glycosylation is present at N182. Residues 201–221 form a helical membrane-spanning segment; that stretch reads FWIGGLSILTTVPGFLLPLLL. The Cytoplasmic portion of the chain corresponds to 222-249; that stretch reads MTIFYCFIGGKVTMHFQNLKKEEQKKKR. A helical membrane pass occupies residues 250 to 270; it reads LLKIIITLVVVFAICWLPFHI. Residues 271–297 lie on the Extracellular side of the membrane; that stretch reads LKTIHFLDLMGFLELSCSAQNIIVSLH. A helical membrane pass occupies residues 298-318; the sequence is PYATCLAYVNSCLNPFLYAFF. Residues 319–363 are Cytoplasmic-facing; it reads DLRFRSQCFFFFGFKKVLQGHLSNTSSSLSAQTQKSEIHSLATKV.

It belongs to the G-protein coupled receptor 1 family. As to expression, expressed in all blood vessels including the posterior cardinal vein, intersomitic veins and the vitelline vein network.

The protein resides in the cell membrane. G protein-coupled receptor for peptide hormones apelin (apln) and apelin receptor early endogenous ligand (apela), that plays a role in the regulation of normal cardiovascular function and fluid homeostasis. When acting as apelin receptor, activates both G(i) protein pathway that inhibits adenylate cyclase activity, and the beta-arrestin pathway that promotes internalization of the receptor. Also functions as mechanoreceptor that is activated by pathological stimuli in a G-protein-independent fashion to induce beta-arrestin signaling, hence eliciting cardiac hypertrophy. However, the presence of apelin ligand blunts cardiac hypertrophic induction from APLNR/APJ on response to pathological stimuli. Plays a key role in early development such as gastrulation, blood vessels formation and heart morphogenesis by acting as a receptor for apela hormone, promoting endoderm and mesendoderm cell migration and regulating the migration of cells fated to become myocardial progenitors, respectively. Promotes angioblast migration toward the embryonic midline, i.e. the position of the future vessel formation, during vasculogenesis. May promote sinus venosus (SV)-derived endothelial cells migration into the developing heart to promote coronary blood vessel development. Required for cardiovascular development, particularly for intersomitic vein angiogenesis by acting as a receptor for apln hormone. Also plays a role in various processes in adults such as regulation of blood vessel formation, blood pressure, heart contractility, and heart failure. Acts upstream of the i/o type of G-alpha proteins in the differentiation of endothelium, erythroid cells, myeloid cells and cardiomyocytes. In Xenopus laevis (African clawed frog), this protein is Apelin receptor B (aplnr-b).